A 507-amino-acid chain; its full sequence is MVTIRADEISNIIRERIEQYNREVKIVNTGTVLQVGDGIARIYGLDEVMAGELVEFEEGTIGIALNLESNNVGVVLMGDGLMIQEGSSVKATGRIAQIPVSEAYLGRVINALAKPIDGRGEISASESRLIESPAPGIISRRSVYEPLQTGLIAIDSMIPIGRGQRELIIGDRQTGKTAVATDTILNQQGQNVICVYVAIGQKASSVAQVVTTLQERGAMEYTIVVAETADSPATLQYLAPYTGAALAEYFMYRERHTLIIYDDLSKQAQAYRQMSLLLRRPPGREAYPGDVFYLHSRLLERAAKLSSRLGEGSMTALPIVETQSGDVSAYIPTNVISITDGQIFLSADLFNAGIRPAINVGISVSRVGSAAQIKAMKQVAGKLKLELAQFVELEAFAQFASDLDKATQNQLARGQRLRELLKQSQSAPLTVEEQIMTIYTGTNGYLDSLEIGQVRKFLVELRTYLKTNKPQFQEIISSTKTFTEEAETLLKEAIQEQKERFVIQEQV.

Residue 170–177 (GDRQTGKT) participates in ATP binding.

It belongs to the ATPase alpha/beta chains family. In terms of assembly, F-type ATPases have 2 components, CF(1) - the catalytic core - and CF(0) - the membrane proton channel. CF(1) has five subunits: alpha(3), beta(3), gamma(1), delta(1), epsilon(1). CF(0) has four main subunits: a, b, b' and c.

It is found in the plastid. The protein resides in the chloroplast thylakoid membrane. It carries out the reaction ATP + H2O + 4 H(+)(in) = ADP + phosphate + 5 H(+)(out). In terms of biological role, produces ATP from ADP in the presence of a proton gradient across the membrane. The alpha chain is a regulatory subunit. This is ATP synthase subunit alpha, chloroplastic from Manihot esculenta (Cassava).